Reading from the N-terminus, the 1066-residue chain is Bifunctional cytochrome P450/NADPH--P450 reductase (1066 aa).

The segment at 1–480 (MAESVPIPEP…LAGNGATSSS (480 aa)) is cytochrome P450. Heme is bound at residue C407. The NADPH-P-450 reductase stretch occupies residues 481–1066 (THNIKAAANL…NERFATDVFD (586 aa)). One can recognise a Flavodoxin-like domain in the interval 500 to 641 (MAIFYGSNSG…DFEAWEDIVL (142 aa)). FMN is bound by residues 506 to 511 (SNSGTC), 554 to 557 (SYEG), C588, and T596. The FAD-binding FR-type domain occupies 676 to 904 (QDVEEALVVA…RASSEAFHLP (229 aa)).

This sequence in the N-terminal section; belongs to the cytochrome P450 family. It depends on FAD as a cofactor. FMN serves as cofactor. Heme is required as a cofactor.

It localises to the membrane. It catalyses the reaction an organic molecule + reduced [NADPH--hemoprotein reductase] + O2 = an alcohol + oxidized [NADPH--hemoprotein reductase] + H2O + H(+). It carries out the reaction 2 oxidized [cytochrome P450] + NADPH = 2 reduced [cytochrome P450] + NADP(+) + H(+). With respect to regulation, stimulated NADPH--cytochrome reductase activity in the presence of substrate. Inhibited by fatty acid substrates longer than 13 carbons and the degree of inhibition increases with increasing chain length. In terms of biological role, functions as a fatty acid monooxygenase. Catalyzes hydroxylation of fatty acids at omega-1, omega-2 and omega-3 positions. Shows activity toward fatty acids with a chain length of 9-18 carbons with optimum chain lengths of 12-14 carbons (lauric, tridecylic and myristic acids). Can also use shorter saturated fatty acids with a chain length of 9 or 10 carbons as substrates. Also displays a NADPH-dependent reductase activity in the C-terminal domain, which allows electron transfer from NADPH to the heme iron of the cytochrome P450 N-terminal domain. This is Bifunctional cytochrome P450/NADPH--P450 reductase from Fusarium oxysporum (Fusarium vascular wilt).